Consider the following 426-residue polypeptide: Dihydroorotase (426 aa).

Zn(2+) contacts are provided by His-58 and His-60. Substrate is bound by residues His-60–Arg-62 and Asn-92. Positions 150, 177, and 230 each coordinate Zn(2+). A substrate-binding site is contributed by Asn-276. Asp-303 contacts Zn(2+). Asp-303 is a catalytic residue. Residues His-307 and Phe-321 to Gly-322 contribute to the substrate site.

Belongs to the metallo-dependent hydrolases superfamily. DHOase family. Class I DHOase subfamily. It depends on Zn(2+) as a cofactor.

The catalysed reaction is (S)-dihydroorotate + H2O = N-carbamoyl-L-aspartate + H(+). Its pathway is pyrimidine metabolism; UMP biosynthesis via de novo pathway; (S)-dihydroorotate from bicarbonate: step 3/3. Catalyzes the reversible cyclization of carbamoyl aspartate to dihydroorotate. This is Dihydroorotase from Listeria welshimeri serovar 6b (strain ATCC 35897 / DSM 20650 / CCUG 15529 / CIP 8149 / NCTC 11857 / SLCC 5334 / V8).